A 277-amino-acid polypeptide reads, in one-letter code: Large ribosomal subunit protein uL2 (277 aa).

Disordered stretches follow at residues 32–58 and 225–277; these read KSLT…RGGG and VAMN…RRNK. Residues 258 to 277 show a composition bias toward basic residues; it reads YKTRKKKRYSDKFIIKRRNK.

The protein belongs to the universal ribosomal protein uL2 family. As to quaternary structure, part of the 50S ribosomal subunit. Forms a bridge to the 30S subunit in the 70S ribosome.

One of the primary rRNA binding proteins. Required for association of the 30S and 50S subunits to form the 70S ribosome, for tRNA binding and peptide bond formation. It has been suggested to have peptidyltransferase activity; this is somewhat controversial. Makes several contacts with the 16S rRNA in the 70S ribosome. This Borreliella burgdorferi (strain ATCC 35210 / DSM 4680 / CIP 102532 / B31) (Borrelia burgdorferi) protein is Large ribosomal subunit protein uL2.